The sequence spans 608 residues: Zinc finger protein 652 (608 aa).

A Phosphoserine modification is found at serine 57. Positions 61-232 (VLADTKMSKP…KRATKEAKAP (172 aa)) are disordered. Residues 71-97 (HLHETEEQPYFREPRAVSDVHTVKEDR) are compositionally biased toward basic and acidic residues. Acidic residues-rich tracts occupy residues 98–108 (ENSDDTEEEEE) and 151–162 (EEDEEETEEEAT). Residue serine 100 is modified to Phosphoserine. Threonine 103 is modified (phosphothreonine). Residues 194-208 (AASAAAATTSPAPRT) are compositionally biased toward low complexity. Residues serine 196 and serine 203 each carry the phosphoserine modification. The C2H2-type 1 zinc finger occupies 244–267 (LTCEKCPRVFNTRWYLEKHMNVTH). A C2H2-type 2; degenerate zinc finger spans residues 271-293 (QICDKCGKKFVLESELSLHQQTD). C2H2-type zinc fingers lie at residues 298-321 (IQCV…KIVH), 328-350 (FACE…MVAH), 356-378 (FTCE…SLQH), 384-406 (FRCE…MSIH), 412-434 (FMCQ…MKTH), and 440-462 (FICE…RRTH). A C2H2-type 9; degenerate zinc finger spans residues 468 to 491 (YPCDVCGQRFRFSNMLKAHKEKCF). A mediates interaction with CBFA2T3 region spans residues 497–608 (VNVPPAVQIP…KNSAAPAQHH (112 aa)).

It belongs to the krueppel C2H2-type zinc-finger protein family. Interacts with CBFA2T3.

Its subcellular location is the nucleus. Functionally, functions as a transcriptional repressor. The protein is Zinc finger protein 652 (Znf652) of Mus musculus (Mouse).